Reading from the N-terminus, the 81-residue chain is DNA-directed RNA polymerase subunit Rpo6 (81 aa).

Belongs to the archaeal Rpo6/eukaryotic RPB6 RNA polymerase subunit family. In terms of assembly, part of the RNA polymerase complex.

It is found in the cytoplasm. It catalyses the reaction RNA(n) + a ribonucleoside 5'-triphosphate = RNA(n+1) + diphosphate. DNA-dependent RNA polymerase (RNAP) catalyzes the transcription of DNA into RNA using the four ribonucleoside triphosphates as substrates. The chain is DNA-directed RNA polymerase subunit Rpo6 from Thermofilum pendens (strain DSM 2475 / Hrk 5).